The following is a 384-amino-acid chain: PqqA peptide cyclase (384 aa).

A Radical SAM core domain is found at 5–220 (VGLPLWLLAE…TNEYREKLKA (216 aa)). The [4Fe-4S] cluster site is built by Cys-19, Cys-23, and Cys-26.

The protein belongs to the radical SAM superfamily. PqqE family. In terms of assembly, interacts with PqqD. The interaction is necessary for activity of PqqE. [4Fe-4S] cluster is required as a cofactor.

The enzyme catalyses [PQQ precursor protein] + S-adenosyl-L-methionine = E-Y cross-linked-[PQQ precursor protein] + 5'-deoxyadenosine + L-methionine + H(+). Its pathway is cofactor biosynthesis; pyrroloquinoline quinone biosynthesis. Catalyzes the cross-linking of a glutamate residue and a tyrosine residue in the PqqA protein as part of the biosynthesis of pyrroloquinoline quinone (PQQ). In Acinetobacter baumannii (strain SDF), this protein is PqqA peptide cyclase.